Consider the following 418-residue polypeptide: MSTIKPSPSNNNLKVRSRPRRKSSIGKIDLGDTVPSLGTMFETKESKTAAKRRMQRLSEATKNDSDLVKKIWFSFREISYRHAWIAPLMILIAVYSAYFTSGNTTKTNVLHRFVAVSYQIGDTNAYGKGINDLCFVFYYMIFFTFLREFLMDVVIRPFAIRLHVTSKHRIKRIMEQMYAIFYTGVSGPFGIYCMYHSDLWFFNTKAMYRTYPDFTNPFLFKVFYLGQAAFWAQQACILVLQLEKPRKDHNELTFHHIVTLLLIWSSYVFHFTKMGLPIYITMDVSDFLLSFSKTLNYLDSGLAFFSFAIFVVAWIYLRHYINLKILWSVLTQFRTEGNYVLNFATQQYKCWISLPIVFVLIGALQLVNLYWLFLIFRVLYRILWRGILKDDRSDSESDEESDESSTTPTDSTPTKKDI.

Polar residues predominate over residues 1-14; that stretch reads MSTIKPSPSNNNLK. Residues 1–25 form a disordered region; that stretch reads MSTIKPSPSNNNLKVRSRPRRKSSI. Position 2 is an N-acetylserine (Ser-2). The Cytoplasmic segment spans residues 2–81; it reads STIKPSPSNN…WFSFREISYR (80 aa). Basic residues predominate over residues 15-24; the sequence is VRSRPRRKSS. 2 positions are modified to phosphoserine: Ser-23 and Ser-24. A helical transmembrane segment spans residues 82-102; sequence HAWIAPLMILIAVYSAYFTSG. Residue Asn-103 is glycosylated (N-linked (GlcNAc...) asparagine). Residues 103-130 are Lumenal-facing; that stretch reads NTTKTNVLHRFVAVSYQIGDTNAYGKGI. Residues 131 to 155 form a helical membrane-spanning segment; it reads NDLCFVFYYMIFFTFLREFLMDVVI. The Cytoplasmic segment spans residues 156–172; that stretch reads RPFAIRLHVTSKHRIKR. One can recognise a TLC domain in the interval 168 to 385; that stretch reads HRIKRIMEQM…FRVLYRILWR (218 aa). Fumonisin B1-binding residues include Arg-169, Arg-172, and Tyr-182. A helical transmembrane segment spans residues 173–194; that stretch reads IMEQMYAIFYTGVSGPFGIYCM. At 195–217 the chain is on the lumenal side; the sequence is YHSDLWFFNTKAMYRTYPDFTNP. Residues 218-240 form a helical membrane-spanning segment; sequence FLFKVFYLGQAAFWAQQACILVL. Positions 224 and 231 each coordinate hexacosanoate. Trp-231 provides a ligand contact to fumonisin B1. Trp-231 serves as a coordination point for hexacosanoyl-CoA. The Cytoplasmic segment spans residues 241–249; sequence QLEKPRKDH. A helical transmembrane segment spans residues 250 to 268; it reads NELTFHHIVTLLLIWSSYV. Position 255 (His-255) interacts with fumonisin B1. Residues His-255, Thr-259, Leu-262, Ile-263, Ser-265, Ser-266, Phe-269, Phe-271, Met-274, Gly-275, Ile-278, Tyr-279, Met-282, Asp-283, and Asp-286 each coordinate hexacosanoate. Positions 255, 259, and 262 each coordinate hexacosanoyl-CoA. The hexacosanoyl-CoA site is built by Ser-265 and Ser-266. The Lumenal portion of the chain corresponds to 269-273; that stretch reads FHFTK. Hexacosanoyl-CoA contacts are provided by Phe-271, Met-274, Gly-275, Ile-278, Tyr-279, and Met-282. Residues 274-295 traverse the membrane as a helical segment; it reads MGLPIYITMDVSDFLLSFSKTL. 9 residues coordinate fumonisin B1: Asp-286, Leu-289, Lys-293, Asn-296, Tyr-297, Ala-303, Phe-304, Phe-307, and Trp-314. Positions 286, 289, 293, and 296 each coordinate hexacosanoyl-CoA. Topologically, residues 296 to 305 are cytoplasmic; that stretch reads NYLDSGLAFF. The chain crosses the membrane as a helical span at residues 306–334; it reads SFAIFVVAWIYLRHYINLKILWSVLTQFR. Phe-307 lines the hexacosanoyl-CoA pocket. 10 residues coordinate hexacosanoate: Arg-318, Phe-343, Tyr-348, Ile-352, Ser-353, Ile-356, Val-357, Leu-360, Ile-361, and Trp-371. Residue Arg-318 participates in hexacosanoyl-CoA binding. The Lumenal portion of the chain corresponds to 335–353; that stretch reads TEGNYVLNFATQQYKCWIS. Positions 348, 352, 353, 356, 357, and 360 each coordinate hexacosanoyl-CoA. Residues 354–382 traverse the membrane as a helical segment; that stretch reads LPIVFVLIGALQLVNLYWLFLIFRVLYRI. Residues Trp-371, Ile-375, Val-378, Ile-382, and Arg-385 each coordinate fumonisin B1. A hexacosanoyl-CoA-binding site is contributed by Trp-371. The Cytoplasmic portion of the chain corresponds to 383 to 418; it reads LWRGILKDDRSDSESDEESDESSTTPTDSTPTKKDI. A disordered region spans residues 390-418; the sequence is DDRSDSESDEESDESSTTPTDSTPTKKDI.

Belongs to the sphingosine N-acyltransferase family. In terms of assembly, component of the ceramide synthase complex composed of at least LAC1, LAG1 and LIP1. Forms a heterotetrameric complex, where one unit of the LIP1 homodimer interacts with LAC1 and the other with either LAC1 or LAG1. Phosphorylated; phosphorylation is induced upon disruption of sphingolipid synthesis. Phosphorylation is inhibited by exogenous addition of phytosphingosine.

It localises to the endoplasmic reticulum membrane. It catalyses the reaction a very long-chain fatty acyl-CoA + a sphingoid base = an N-(very-long-chain fatty acyl)-sphingoid base + CoA + H(+). The enzyme catalyses hexacosanoyl-CoA + sphinganine = N-hexacosanoylsphinganine + CoA + H(+). It carries out the reaction eicosanoyl-CoA + sphinganine = N-eicosanoylsphinganine + CoA + H(+). The catalysed reaction is a fatty acyl-CoA + sphinganine = an N-acylsphinganine + CoA + H(+). It catalyses the reaction (4R)-hydroxysphinganine + a fatty acyl-CoA = an N-acyl-(4R)-4-hydroxysphinganine + CoA + H(+). It participates in lipid metabolism; sphingolipid metabolism. With respect to regulation, as part of the ceramide synthase complex, inhibited by the sphinganine analog mycotoxin, fumonisin B1 (FB1). Activated by ACB1, as part of the ceramide synthase complex. In terms of biological role, component of the ceramide synthase complex that catalyzes the transfer of the acyl chain from acyl-CoA to a sphingoid base, with high selectivity toward hexacosanoyl-CoA (C26:0-CoA). N-acylates sphinganine and phytosphingosine bases to form dihydroceramides and phytoceramides, respectively. Redundant with LAG1. Facilitates ER-to-Golgi transport of GPI-anchored proteins. Has a lower affinity for phytosphingosine (PHS) than dihydrosphingosine (DHS); PHS is required for the synthesis of phytoceramides and the formation of nuclear envelopes. Along with LAG1, plays a role in pheromone-induced MAP kinase-activation of mating and formation of diploid cells. May also play a role, together with LAG1, in the polarized membrane distribution of phosphatidylinositol 4,5 biphosphate required for STE5 localization to the plasma membrane. In Saccharomyces cerevisiae (strain ATCC 204508 / S288c) (Baker's yeast), this protein is Ceramide synthase LAC1 (LAC1).